Reading from the N-terminus, the 423-residue chain is Cell adhesion molecule CEACAM16 (423 aa).

The N-terminal stretch at 1-22 is a signal peptide; the sequence is MKMPLTWGSWFLLSAWILNAGA. The N-linked (GlcNAc...) asparagine glycan is linked to Asn38. The disordered stretch occupies residues 77 to 96; sequence ETPGPAHTGREAVRPDGSLD. The span at 84–95 shows a compositional bias: basic and acidic residues; sequence TGREAVRPDGSL. Ig-like C2-type domains are found at residues 134 to 219 and 224 to 310; these read PPTV…LNLT and PERV…ASVV. Cys155 and Cys202 form a disulfide bridge. An N-linked (GlcNAc...) asparagine glycan is attached at Asn217. The cysteines at positions 253 and 294 are disulfide-linked.

The protein belongs to the immunoglobulin superfamily. CEA family. Homooligomer; can for homodimers and homotetramers. Interacts with TECTA and TECTB.

It is found in the secreted. Functionally, required for proper hearing, plays a role in maintaining the integrity of the tectorial membrane. The polypeptide is Cell adhesion molecule CEACAM16 (Rattus norvegicus (Rat)).